We begin with the raw amino-acid sequence, 1035 residues long: Sialidase A (1035 aa).

A signal peptide spans 1–53 (MSYFRNRDIDIERNSMNRSVQERKCRYSIRKLSVGAVSMIVGAVVFGTSPVLA). The interval 57-112 (ASEQPLANETQLSGESSTLTDTEKSQPSSETELSGNKQEQERKDKQEEKIPRDYYA) is disordered. Positions 61 to 92 (PLANETQLSGESSTLTDTEKSQPSSETELSGN) are enriched in polar residues. Basic and acidic residues predominate over residues 94-112 (QEQERKDKQEEKIPRDYYA). Arg347 provides a ligand contact to substrate. Asp372 functions as the Proton acceptor in the catalytic mechanism. BNR repeat units follow at residues 381 to 392 (RRSEDNGKTWGD), 539 to 550 (SYSDDDGKTWSA), and 607 to 618 (IYSDDHGKTWHA). Glu647 is a catalytic residue. Substrate is bound at residue Arg663. One copy of the BNR 4 repeat lies at 672 to 683 (ATSKDGGVTWEK). The disordered stretch occupies residues 902 to 951 (GPLGTSGEEPAPTVEKPEYTGPLGTSGEEPAPTVEKPEYTGPLGTAGEEA). The short motif at 1003–1007 (LPETG) is the LPXTG sorting signal element. Thr1006 is subject to Pentaglycyl murein peptidoglycan amidated threonine. Residues 1007-1035 (GNKESDLLASLGLTAFFLGLFTLGKKREQ) constitute a propeptide, removed by sortase.

This sequence belongs to the glycosyl hydrolase 33 family.

The protein resides in the secreted. Its subcellular location is the cell wall. The catalysed reaction is Hydrolysis of alpha-(2-&gt;3)-, alpha-(2-&gt;6)-, alpha-(2-&gt;8)- glycosidic linkages of terminal sialic acid residues in oligosaccharides, glycoproteins, glycolipids, colominic acid and synthetic substrates.. This chain is Sialidase A (nanA), found in Streptococcus pneumoniae.